The primary structure comprises 269 residues: Cytochrome c oxidase subunit 3 (269 aa).

Residues 1–22 (MTNLIRSNFQDHPFHLVSPSPW) are Mitochondrial matrix-facing. Residues 23 to 41 (PLNTSVCLLNLTTTGALSM) form a helical membrane-spanning segment. The Mitochondrial intermembrane segment spans residues 42 to 48 (HNFNNIH). A helical membrane pass occupies residues 49–73 (YLYYIALIGLVSAMFLWFRDIISEG). Residues 74 to 80 (TFLGDHT) lie on the Mitochondrial matrix side of the membrane. A helical membrane pass occupies residues 81-114 (LAVQRGLNLGIILFIVSEALFFLAIFWAFFHSAL). Topologically, residues 115-137 (TPTVELGAQWPPIGIEPVNPFEL) are mitochondrial intermembrane. The helical transmembrane segment at 138–161 (PLLNTVILLSSGATITYAHHALIK) threads the bilayer. The Mitochondrial matrix segment spans residues 162–164 (GER). A helical transmembrane segment spans residues 165–188 (EGALYGSIATILLAIIFTGFQGVE). Topologically, residues 189–201 (YSVSSFTISDGAF) are mitochondrial intermembrane. A helical membrane pass occupies residues 202–230 (GTCFFFSTGFHGIHVIIGTIFLAVALWRI). Over 231-248 (FAYHLTDNHHVGFEGGIL) the chain is Mitochondrial matrix. A helical membrane pass occupies residues 249–265 (YWHFVDVVWLFLYISVY). At 266–269 (YWGS) the chain is on the mitochondrial intermembrane side.

This sequence belongs to the cytochrome c oxidase subunit 3 family. Component of the cytochrome c oxidase (complex IV, CIV), a multisubunit enzyme composed of 11 subunits. The complex is composed of a catalytic core of 3 subunits Cox1, Cox2 and Cox3, encoded in the mitochondrial DNA, and 8 supernumerary subunits Cox4, Cox5a/Cox5, Cox6, Cox7, Cox8, Cox7a/Cox9, Cox6b/Cox12 and Cox6a/Cox13, which are encoded in the nuclear genome. The complex exists as a monomer or a dimer and forms respiratory supercomplexes (SCs) in the inner mitochondrial membrane with NADH-ubiquinone oxidoreductase (complex I, CI) and ubiquinol-cytochrome c oxidoreductase (cytochrome b-c1 complex, complex III, CIII), resulting in various different assemblies (supercomplexes I(1)IV(1), I(1)III(3)IV(2), III(2)IV(1) and III(2)IV(2) as well as larger supercomplexes of compositions like I(1)III(2)IV(5-6)).

It is found in the mitochondrion inner membrane. The enzyme catalyses 4 Fe(II)-[cytochrome c] + O2 + 8 H(+)(in) = 4 Fe(III)-[cytochrome c] + 2 H2O + 4 H(+)(out). Its function is as follows. Component of the cytochrome c oxidase, the last enzyme in the mitochondrial electron transport chain which drives oxidative phosphorylation. The respiratory chain contains 3 multisubunit complexes succinate dehydrogenase (complex II, CII), ubiquinol-cytochrome c oxidoreductase (cytochrome b-c1 complex, complex III, CIII) and cytochrome c oxidase (complex IV, CIV), that cooperate to transfer electrons derived from NADH and succinate to molecular oxygen, creating an electrochemical gradient over the inner membrane that drives transmembrane transport and the ATP synthase. Cytochrome c oxidase is the component of the respiratory chain that catalyzes the reduction of oxygen to water. Electrons originating from reduced cytochrome c in the intermembrane space (IMS) are transferred via the dinuclear copper A center (CU(A)) of Cox2 and heme A of Cox1 to the active site in Cox1, a binuclear center (BNC) formed by heme A3 and copper B (CU(B)). The BNC reduces molecular oxygen to 2 water molecules using 4 electrons from cytochrome c in the IMS and 4 protons from the mitochondrial matrix. The protein is Cytochrome c oxidase subunit 3 (cox-3) of Neurospora crassa (strain ATCC 24698 / 74-OR23-1A / CBS 708.71 / DSM 1257 / FGSC 987).